Reading from the N-terminus, the 695-residue chain is MSKLSEKEAFLFDRSIDQFEKGQYSKSLKTIQSVLKKKPKHPDSVALLGLNLCKLHDSRSALLKCGYASSIDPKSQFCWHALAIVYRETKDYNNSLKCYQNALAISPNNESLWYDAAYLQAQLGLYQPLFDNWNRLLQLDSSNLEYRLCFTLSAFLSGNYKESLEQIQYLISSCNLSPLVVSRLISFLPRICEHIENGSQTVLEILLMNQNSFLNNFNFEHIKADFAFRQKNYEESIYLYARLLIKFPNRLDYSEKYLNSLWNFYKSGGLALDLLLKRTDSLIKTFSEILQTGISVLIFLLSKNLDYDFCLNHLISYSMHHFIPSFISLLKIPLKTNDAFSKKLITMLSNFREGDSAKNIPTHKLWCTYCLCLAHYKLGDYEESNYWLNLAIDHTPTYPELFLAKAKIFLCMGEIEEALCSFKRSVELDKSDRALASKYAKYLIRMDRNEEAYIVLSKFSRFRFGGVCNYLAETECVWFLVEDGESLLRQKLYGLALKRFHSIYQIYKKWSFLKFDYFTQCAEDGEFQEYVELVEWSDNLWSSTDYLRATLGALTIYLLLFESKFNMYGNKAEEISHMSEVEQIAYAREDNKKIMKLQKIEEDKIKSYIPSESEEPLVIDEDYFGHKLLITDDPLTEAMRFLQPICWHKIKGWGFLKILSSKLYKLKGIIFCYYALTNNIEGLHQKANSLETSVL.

TPR repeat units follow at residues 8-41 (EAFLFDRSIDQFEKGQYSKSLKTIQSVLKKKPKH), 43-75 (DSVALLGLNLCKLHDSRSALLKCGYASSIDPKS), 76-109 (QFCWHALAIVYRETKDYNNSLKCYQNALAISPNN), 111-143 (SLWYDAAYLQAQLGLYQPLFDNWNRLLQLDSSN), 145-177 (EYRLCFTLSAFLSGNYKESLEQIQYLISSCNLS), 217-250 (FNFEHIKADFAFRQKNYEESIYLYARLLIKFPNR), 262-296 (WNFYKSGGLALDLLLKRTDSLIKTFSEILQTGISV), 365-398 (LWCTYCLCLAHYKLGDYEESNYWLNLAIDHTPTY), 399-432 (PELFLAKAKIFLCMGEIEEALCSFKRSVELDKSD), and 477-510 (VWFLVEDGESLLRQKLYGLALKRFHSIYQIYKKW).

Component of the N-terminal acetyltransferase A (NatA) complex.

It localises to the cytoplasm. The protein resides in the nucleus. Functionally, non-catalytic component of the NatA N-terminal acetyltransferase, which catalyzes acetylation of proteins beginning with Met-Ser, Met-Gly and Met-Ala. N-acetylation plays a role in normal eukaryotic translation and processing, protect against proteolytic degradation and protein turnover. The polypeptide is N-terminal acetyltransferase A complex subunit-like protein C418.02 (Schizosaccharomyces pombe (strain 972 / ATCC 24843) (Fission yeast)).